The chain runs to 1036 residues: Mediator of RNA polymerase II transcription subunit 24 (1036 aa).

This sequence belongs to the Mediator complex subunit 24 family. As to quaternary structure, component of the Mediator complex.

It localises to the nucleus. Its function is as follows. Component of the Mediator complex, a coactivator involved in the regulated transcription of nearly all RNA polymerase II-dependent genes. Mediator functions as a bridge to convey information from gene-specific regulatory proteins to the basal RNA polymerase II transcription machinery. Mediator is recruited to promoters by direct interactions with regulatory proteins and serves as a scaffold for the assembly of a functional preinitiation complex with RNA polymerase II and the general transcription factors. In Anopheles gambiae (African malaria mosquito), this protein is Mediator of RNA polymerase II transcription subunit 24 (MED24).